Here is a 615-residue protein sequence, read N- to C-terminus: DNA mismatch repair protein MutL (615 aa).

Belongs to the DNA mismatch repair MutL/HexB family.

Functionally, this protein is involved in the repair of mismatches in DNA. It is required for dam-dependent methyl-directed DNA mismatch repair. May act as a 'molecular matchmaker', a protein that promotes the formation of a stable complex between two or more DNA-binding proteins in an ATP-dependent manner without itself being part of a final effector complex. This Histophilus somni (strain 2336) (Haemophilus somnus) protein is DNA mismatch repair protein MutL.